Here is a 444-residue protein sequence, read N- to C-terminus: N-succinylarginine dihydrolase (444 aa).

Residues 19–28, asparagine 110, and 137–138 contribute to the substrate site; these read AGLSFGNVAS and HR. Glutamate 174 is an active-site residue. Arginine 214 lines the substrate pocket. Histidine 250 is an active-site residue. Aspartate 252 and asparagine 362 together coordinate substrate. Catalysis depends on cysteine 368, which acts as the Nucleophile.

This sequence belongs to the succinylarginine dihydrolase family. Homodimer.

The enzyme catalyses N(2)-succinyl-L-arginine + 2 H2O + 2 H(+) = N(2)-succinyl-L-ornithine + 2 NH4(+) + CO2. Its pathway is amino-acid degradation; L-arginine degradation via AST pathway; L-glutamate and succinate from L-arginine: step 2/5. Its function is as follows. Catalyzes the hydrolysis of N(2)-succinylarginine into N(2)-succinylornithine, ammonia and CO(2). In Shewanella amazonensis (strain ATCC BAA-1098 / SB2B), this protein is N-succinylarginine dihydrolase.